A 142-amino-acid chain; its full sequence is uncharacterized protein (142 aa).

Belongs to the GlcG family.

This is an uncharacterized protein from Citrobacter freundii.